Reading from the N-terminus, the 247-residue chain is Adenosylcobinamide-GDP ribazoletransferase (247 aa).

A run of 6 helical transmembrane segments spans residues 31 to 51 (ILFY…VTCI), 55 to 75 (LPAL…TGGL), 109 to 129 (IGVL…YVLI), 135 to 155 (LFLI…FLTT), 183 to 203 (VLLL…GFLI), and 227 to 247 (AIEI…FYLV).

Belongs to the CobS family. It depends on Mg(2+) as a cofactor.

The protein localises to the cell inner membrane. The enzyme catalyses alpha-ribazole + adenosylcob(III)inamide-GDP = adenosylcob(III)alamin + GMP + H(+). It catalyses the reaction alpha-ribazole 5'-phosphate + adenosylcob(III)inamide-GDP = adenosylcob(III)alamin 5'-phosphate + GMP + H(+). It functions in the pathway cofactor biosynthesis; adenosylcobalamin biosynthesis; adenosylcobalamin from cob(II)yrinate a,c-diamide: step 7/7. Its function is as follows. Joins adenosylcobinamide-GDP and alpha-ribazole to generate adenosylcobalamin (Ado-cobalamin). Also synthesizes adenosylcobalamin 5'-phosphate from adenosylcobinamide-GDP and alpha-ribazole 5'-phosphate. This is Adenosylcobinamide-GDP ribazoletransferase from Acinetobacter baumannii (strain ATCC 17978 / DSM 105126 / CIP 53.77 / LMG 1025 / NCDC KC755 / 5377).